We begin with the raw amino-acid sequence, 312 residues long: Probable splicing factor, arginine/serine-rich 1 (312 aa).

The RRM 1 domain maps to 3–73; that stretch reads ARIYIGRLTS…ERVILDYSKP (71 aa). Disordered regions lie at residues 69–125 and 196–312; these read DYSK…GRPY and KMID…DGDN. A compositionally biased stretch (gly residues) spans 74–90; that stretch reads RGGGGDRGGFGGGGRGG. Over residues 103-121 the composition is skewed to basic and acidic residues; that stretch reads GRDRFDRYDRGPPRRESRY. The 74-residue stretch at 129 to 202 folds into the RRM 2 domain; that stretch reads HRVVVENLSS…RKIKMIDDSQ (74 aa). Positions 206-259 are enriched in basic residues; the sequence is SRSRSNSRSRSRSRSRDRRRSRSRSSSRSKSRSRSPPKRSRRESKSKSRSRSRS.

This sequence belongs to the splicing factor SR family. Extensively phosphorylated on serine residues in the RS domain.

It localises to the nucleus. Functionally, plays a functionally redundant role in spermatogenesis and growth rate control. The sequence is that of Probable splicing factor, arginine/serine-rich 1 (rsp-1) from Caenorhabditis elegans.